The following is a 383-amino-acid chain: Delta(12)-fatty-acid desaturase FAD2 (383 aa).

Helical transmembrane passes span 56-76 (VVYD…YFHL) and 84-104 (VAWP…WVIA). The short motif at 105–109 (HECGH) is the Histidine box-1 element. A helical membrane pass occupies residues 117–137 (LLDDIVGLVLHSCLLVPYFSW). Positions 141–145 (HRRHH) match the Histidine box-2 motif. Helical transmembrane passes span 179 to 199 (LFTL…FNVS), 225 to 245 (IYIS…LAAA), and 249 to 269 (AWVI…LVMI). Positions 315–319 (HVAHH) match the Histidine box-3 motif.

This sequence belongs to the fatty acid desaturase type 1 family. In terms of tissue distribution, expressed in leaves and seeds.

The protein resides in the endoplasmic reticulum membrane. The catalysed reaction is (9Z)-octadecenoyl-CoA + 2 Fe(II)-[cytochrome b5] + O2 + 2 H(+) = (9Z,12Z)-octadecadienoyl-CoA + 2 Fe(III)-[cytochrome b5] + 2 H2O. It catalyses the reaction (9Z)-hexadecenoyl-CoA + 2 Fe(II)-[cytochrome b5] + O2 + 2 H(+) = (9Z,12Z)-hexadecadienoyl-CoA + 2 Fe(III)-[cytochrome b5] + 2 H2O. It functions in the pathway lipid metabolism; polyunsaturated fatty acid biosynthesis. Functionally, catalyzes the desaturation of oleic acid (18:1(9Z)) to linoleic acid (18:2(9Z,12Z)). The sequence is that of Delta(12)-fatty-acid desaturase FAD2 from Vernicia fordii (Tung).